Reading from the N-terminus, the 542-residue chain is 3-(3-hydroxy-phenyl)propionate/3-hydroxycinnamic acid hydroxylase (542 aa).

FAD-binding positions include 10–39 and 278–288; these read SVAI…VVER and FVAGRVALIGD.

The protein belongs to the PheA/TfdB FAD monooxygenase family. The cofactor is FAD.

It catalyses the reaction 3-(3-hydroxyphenyl)propanoate + NADH + O2 + H(+) = 3-(2,3-dihydroxyphenyl)propanoate + NAD(+) + H2O. The catalysed reaction is (2E)-3-(3-hydroxyphenyl)prop-2-enoate + NADH + O2 + H(+) = (2E)-3-(2,3-dihydroxyphenyl)prop-2-enoate + NAD(+) + H2O. The protein operates within aromatic compound metabolism; 3-phenylpropanoate degradation. Functionally, catalyzes the insertion of one atom of molecular oxygen into position 2 of the phenyl ring of 3-(3-hydroxyphenyl)propionate (3-HPP) and hydroxycinnamic acid (3HCI). This Burkholderia cenocepacia (strain HI2424) protein is 3-(3-hydroxy-phenyl)propionate/3-hydroxycinnamic acid hydroxylase.